The sequence spans 317 residues: Probable deoxyhypusine synthase 1 (317 aa).

Residue lysine 285 is the Nucleophile of the active site.

It belongs to the deoxyhypusine synthase family. Requires NAD(+) as cofactor.

The enzyme catalyses [eIF5A protein]-L-lysine + spermidine = [eIF5A protein]-deoxyhypusine + propane-1,3-diamine. It participates in protein modification; eIF5A hypusination. Its function is as follows. Catalyzes the NAD-dependent oxidative cleavage of spermidine and the subsequent transfer of the butylamine moiety of spermidine to the epsilon-amino group of a specific lysine residue of the eIF-5A precursor protein to form the intermediate deoxyhypusine residue. This chain is Probable deoxyhypusine synthase 1 (dys1), found in Methanosarcina mazei (strain ATCC BAA-159 / DSM 3647 / Goe1 / Go1 / JCM 11833 / OCM 88) (Methanosarcina frisia).